Here is a 438-residue protein sequence, read N- to C-terminus: GTPase Der (438 aa).

2 consecutive EngA-type G domains span residues P4 to G168 and I177 to C352. Residues G10 to S17, D57 to I61, N120 to D123, G183 to S190, D230 to V234, and N295 to D298 contribute to the GTP site. The 85-residue stretch at K353–K437 folds into the KH-like domain.

Belongs to the TRAFAC class TrmE-Era-EngA-EngB-Septin-like GTPase superfamily. EngA (Der) GTPase family. Associates with the 50S ribosomal subunit.

GTPase that plays an essential role in the late steps of ribosome biogenesis. This Clostridium kluyveri (strain NBRC 12016) protein is GTPase Der.